We begin with the raw amino-acid sequence, 296 residues long: D-alanine--D-alanine ligase (296 aa).

The ATP-grasp domain maps to 99 to 292 (TYRVLDGYVN…FEELVDAIIQ (194 aa)). 125–176 (GFPCVIKPRKEGSSIGVHICDNSNQLYNDLSEELKKYNEMMIQRYIEGRELT) is a binding site for ATP. Mg(2+) is bound by residues Asp-247, Glu-259, and Asn-261.

The protein belongs to the D-alanine--D-alanine ligase family. It depends on Mg(2+) as a cofactor. Requires Mn(2+) as cofactor.

It is found in the cytoplasm. It catalyses the reaction 2 D-alanine + ATP = D-alanyl-D-alanine + ADP + phosphate + H(+). It functions in the pathway cell wall biogenesis; peptidoglycan biosynthesis. Functionally, cell wall formation. This is D-alanine--D-alanine ligase from Pseudothermotoga lettingae (strain ATCC BAA-301 / DSM 14385 / NBRC 107922 / TMO) (Thermotoga lettingae).